The primary structure comprises 104 residues: MSGGDDLVLHNPVEDGELSAIFMIRNPSGIHVRPAGTIVKLFDGEDCEATFTYLGKTVNARSVMSILMLGASYNGEITVRIKGPSASRVMQKLAEVFNSGFGEL.

Residues 17 to 104 enclose the HPr domain; sequence ELSAIFMIRN…EVFNSGFGEL (88 aa). His31 (pros-phosphohistidine intermediate) is an active-site residue.

It belongs to the HPr family.

It is found in the cytoplasm. Its function is as follows. General (non sugar-specific) component of the phosphoenolpyruvate-dependent sugar phosphotransferase system (sugar PTS). This major carbohydrate active-transport system catalyzes the phosphorylation of incoming sugar substrates concomitantly with their translocation across the cell membrane. The phosphoryl group from phosphoenolpyruvate (PEP) is transferred to the phosphoryl carrier protein HPr by enzyme I. Phospho-HPr then transfers it to the PTS EIIA domain. The sequence is that of Phosphocarrier protein HPr (ptsH) from Chlamydia muridarum (strain MoPn / Nigg).